The chain runs to 338 residues: 3-keto-steroid reductase erg27 (338 aa).

Positions 16, 44, 50, and 75 each coordinate NADP(+). Residues S180 and Y203 each act as proton donor in the active site. Residues Y203, K207, and T236 each contribute to the NADP(+) site. The Lowers pKa of active site Tyr role is filled by K207.

Belongs to the short-chain dehydrogenases/reductases (SDR) family. ERG27 subfamily. In terms of assembly, heterotetramer of erg25, erg26, erg27 and erg28. Erg28 acts as a scaffold to tether erg27 and other 4,4-demethylation-related enzymes, forming a demethylation enzyme complex, in the endoplasmic reticulum.

It catalyses the reaction 3-dehydro-4alpha-methylzymosterol + NADPH + H(+) = 4alpha-methylzymosterol + NADP(+). The protein operates within steroid biosynthesis; zymosterol biosynthesis; zymosterol from lanosterol: step 5/6. It functions in the pathway steroid metabolism; ergosterol biosynthesis. 3-keto-steroid reductase; part of the third module of ergosterol biosynthesis pathway that includes by the late steps of the pathway. Erg27 is a catalytic component of the C-4 demethylation complex that catalyze the reduction of the keto group on the C-3. The third module or late pathway involves the ergosterol synthesis itself through consecutive reactions that mainly occur in the endoplasmic reticulum (ER) membrane. Firstly, the squalene synthase erg9 catalyzes the condensation of 2 farnesyl pyrophosphate moieties to form squalene, which is the precursor of all steroids. Secondly, squalene is converted into lanosterol by the consecutive action of the squalene epoxidase erg1 and the lanosterol synthase erg7. The lanosterol 14-alpha-demethylase erg11/cyp1 catalyzes C14-demethylation of lanosterol to produce 4,4'-dimethyl cholesta-8,14,24-triene-3-beta-ol. In the next steps, a complex process involving various demethylation, reduction and desaturation reactions catalyzed by the C-14 reductase erg24 and the C-4 demethylation complex erg25-erg26-erg27 leads to the production of zymosterol. Erg28 likely functions in the C-4 demethylation complex reaction by tethering erg26 and Erg27 to the endoplasmic reticulum or to facilitate interaction between these proteins. Then, the sterol 24-C-methyltransferase erg6 catalyzes the methyl transfer from S-adenosyl-methionine to the C-24 of zymosterol to form fecosterol. The C-8 sterol isomerase erg2 catalyzes the reaction which results in unsaturation at C-7 in the B ring of sterols and thus converts fecosterol to episterol. The sterol-C5-desaturases erg31 and erg32 then catalyze the introduction of a C-5 double bond in the B ring to produce 5-dehydroepisterol. The C-22 sterol desaturase erg5 further converts 5-dehydroepisterol into ergosta-5,7,22,24(28)-tetraen-3beta-ol by forming the C-22(23) double bond in the sterol side chain. Finally, ergosta-5,7,22,24(28)-tetraen-3beta-ol is substrate of the C-24(28) sterol reductase erg4 to produce ergosterol. In the genus Schizosaccharomyces, a second route exists between lanosterol and fecosterol, via the methylation of lanosterol to eburicol by erg6, followed by C14-demethylation by erg11/cyp1 and C4-demethylation by the demethylation complex erg25-erg26-erg27. This Schizosaccharomyces pombe (strain 972 / ATCC 24843) (Fission yeast) protein is 3-keto-steroid reductase erg27.